The chain runs to 1198 residues: Regulator of G-protein signaling 3 (1198 aa).

The C2 domain maps to 137–256 (GAGQLRLSID…TPDKEISGWY (120 aa)). Residues 299–376 (KITIPRGKDG…EIILLVWRMV (78 aa)) enclose the PDZ domain. Arg-448 carries the omega-N-methylarginine modification. Residues 669-933 (QQLAASPPDS…GAEGGLSLRV (265 aa)) form a disordered region. Ser-674 bears the Phosphoserine mark. Residues 679 to 697 (KMFETEADEKREMALEEGK) are compositionally biased toward basic and acidic residues. Positions 739–751 (EPLSSKDSATSEG) are enriched in polar residues. Over residues 753–773 (PPGPDAPPSKDVPPCQEPPPA) the composition is skewed to pro residues. Positions 877–906 (GDEEDAEEAEEVEEGEEGEEDEDEDTSDDN) are enriched in acidic residues. Residues 907–917 (YGERSEAKRSS) are compositionally biased toward basic and acidic residues. A phosphoserine mark is found at Ser-943, Ser-946, Ser-978, and Ser-1007. 2 disordered regions span residues 1007 to 1026 (SGAD…KSKN) and 1032 to 1056 (KNKL…ADKM). An RGS domain is found at 1073–1198 (SLEKLLVHKY…INQKKMSPPL (126 aa)).

Binds EFNB1 and EFNB2. Binds the GNB1-GNG2 heterodimer. Post-translationally, phosphorylated by cyclic GMP-dependent protein kinase. ISGylated.

The protein resides in the cytoplasm. It localises to the nucleus. It is found in the cell membrane. In terms of biological role, down-regulates signaling from heterotrimeric G-proteins by increasing the GTPase activity of the alpha subunits, thereby driving them into their inactive GDP-bound form. Down-regulates G-protein-mediated release of inositol phosphates and activation of MAP kinases. In Homo sapiens (Human), this protein is Regulator of G-protein signaling 3 (RGS3).